Here is a 171-residue protein sequence, read N- to C-terminus: Peptide deformylase (171 aa).

Residues C92 and H134 each contribute to the Fe cation site. Residue E135 is part of the active site. Fe cation is bound at residue H138.

Belongs to the polypeptide deformylase family. The cofactor is Fe(2+).

The catalysed reaction is N-terminal N-formyl-L-methionyl-[peptide] + H2O = N-terminal L-methionyl-[peptide] + formate. Functionally, removes the formyl group from the N-terminal Met of newly synthesized proteins. Requires at least a dipeptide for an efficient rate of reaction. N-terminal L-methionine is a prerequisite for activity but the enzyme has broad specificity at other positions. The polypeptide is Peptide deformylase (Polynucleobacter necessarius subsp. necessarius (strain STIR1)).